We begin with the raw amino-acid sequence, 301 residues long: uncharacterized protein (301 aa).

It belongs to the asfivirus E301R family. In terms of assembly, interacts with host IRF3.

Plays a role in the inhibition of host innate immune system by acting as a negatively regulator of type I interferon production. Mechanistically, interacts with and prevents host IRF3 nuclear localization to inhibit its transcriptional activity. This is an uncharacterized protein from African swine fever virus (isolate Tick/South Africa/Pretoriuskop Pr4/1996) (ASFV).